The following is a 333-amino-acid chain: tRNA N6-adenosine threonylcarbamoyltransferase (333 aa).

Fe cation contacts are provided by His111 and His115. Substrate is bound by residues 134-138, Asp167, Gly180, and Asn272; that span reads LVSGG. Asp300 provides a ligand contact to Fe cation.

Belongs to the KAE1 / TsaD family. Fe(2+) is required as a cofactor.

Its subcellular location is the cytoplasm. The catalysed reaction is L-threonylcarbamoyladenylate + adenosine(37) in tRNA = N(6)-L-threonylcarbamoyladenosine(37) in tRNA + AMP + H(+). Functionally, required for the formation of a threonylcarbamoyl group on adenosine at position 37 (t(6)A37) in tRNAs that read codons beginning with adenine. Is involved in the transfer of the threonylcarbamoyl moiety of threonylcarbamoyl-AMP (TC-AMP) to the N6 group of A37, together with TsaE and TsaB. TsaD likely plays a direct catalytic role in this reaction. The sequence is that of tRNA N6-adenosine threonylcarbamoyltransferase from Hamiltonella defensa subsp. Acyrthosiphon pisum (strain 5AT).